A 65-amino-acid polypeptide reads, in one-letter code: Large ribosomal subunit protein bL28 (65 aa).

Residues 1-26 are disordered; it reads MARRDALTGKSALSGQSRSHALNATK. Polar residues predominate over residues 11–22; that stretch reads SALSGQSRSHAL.

The protein belongs to the bacterial ribosomal protein bL28 family.

This chain is Large ribosomal subunit protein bL28, found in Mycoplasma mycoides subsp. mycoides SC (strain CCUG 32753 / NCTC 10114 / PG1).